The sequence spans 249 residues: Testis-expressed protein 101 (249 aa).

A signal peptide spans 1 to 25; sequence MGTPRIQHLLILLVLGASLLTSGLE. Asn-45 and Asn-159 each carry an N-linked (GlcNAc...) asparagine glycan. The UPAR/Ly6 domain maps to 140–211; that stretch reads CPTCVALGTC…PMFVREACPH (72 aa). The GPI-anchor amidated asparagine moiety is linked to residue Asn-222. Positions 223–249 are cleaved as a propeptide — removed in mature form; the sequence is GATCLPIPVWGLQLLLPLLLPSFIHFS.

In terms of assembly, interacts with VAMP3. Interacts with LY6K. Interacts with DPEP3; co-localized on the cell surface of spermatocytes, spermatids, and testicular spermatozoa, co-localized only in cytoplasmic droplets of caput and corpus epididymal sperm. Interacts with ADAM5. In terms of processing, N-glycosylated; by high mannose and/or biantennary complex and/or certain types of hybrid oligosaccharides; possesses different oligosaccharides chains according to its subcellular localization in the testis. Post-translationally, sheds from membrane raft by ACE and released from the cell surface of epididymal sperm while it passes through the caput epididymis leading to disappearance of TEX101 on spermatozoa; is essential to produce fertile spermatozoa. In terms of tissue distribution, detected in testis and spermatogonia. Not detected in spermatocytes. Detected in blood leukocytes.

Its subcellular location is the cell membrane. It localises to the membrane raft. The protein localises to the cytoplasmic vesicle. It is found in the secretory vesicle. The protein resides in the acrosome. Its subcellular location is the secreted. Functionally, plays a role in fertilization by controlling binding of sperm to zona pellucida and migration of spermatozoa into the oviduct. May play a role in signal transduction and promote protein tyrosine phosphorylation. This chain is Testis-expressed protein 101, found in Homo sapiens (Human).